The following is a 412-amino-acid chain: Transforming growth factor beta-3 proprotein (412 aa).

An N-terminal signal peptide occupies residues Met1–Ser23. 3 N-linked (GlcNAc...) asparagine glycosylation sites follow: Asn74, Asn135, and Asn142. Residues Arg261–Asp263 carry the Cell attachment site motif. N5-methylglutamine is present on Gln293. Intrachain disulfides connect Cys307–Cys316, Cys315–Cys378, Cys344–Cys409, and Cys348–Cys411.

This sequence belongs to the TGF-beta family. As to quaternary structure, interacts with ASPN. Latency-associated peptide: Homodimer; disulfide-linked. Latency-associated peptide: Interacts with Transforming growth factor beta-3 (TGF-beta-3) chain; interaction is non-covalent and maintains (TGF-beta-3) in a latent state. Latency-associated peptide: Interacts with LRRC32/GARP; leading to regulate activation of TGF-beta-3 and promote epithelial fusion during palate development. Latency-associated peptide: Interacts (via cell attachment site) with integrins, leading to release of the active TGF-beta-3. Transforming growth factor beta-3: Homodimer; disulfide-linked. Transforming growth factor beta-3: Interacts with TGF-beta receptors (TGFBR1 and TGFBR2), leading to signal transduction. Transforming growth factor beta-3 proprotein: The precursor proprotein is cleaved in the Golgi apparatus to form Transforming growth factor beta-3 (TGF-beta-3) and Latency-associated peptide (LAP) chains, which remain non-covalently linked, rendering TGF-beta-3 inactive. Post-translationally, methylated at Gln-293 by N6AMT1.

It localises to the secreted. The protein localises to the extracellular space. It is found in the extracellular matrix. Functionally, transforming growth factor beta-3 proprotein: Precursor of the Latency-associated peptide (LAP) and Transforming growth factor beta-3 (TGF-beta-3) chains, which constitute the regulatory and active subunit of TGF-beta-3, respectively. Required to maintain the Transforming growth factor beta-3 (TGF-beta-3) chain in a latent state during storage in extracellular matrix. Associates non-covalently with TGF-beta-3 and regulates its activation via interaction with 'milieu molecules', such as LTBP1 and LRRC32/GARP, that control activation of TGF-beta-3. Interaction with integrins results in distortion of the Latency-associated peptide chain and subsequent release of the active TGF-beta-3. In terms of biological role, transforming growth factor beta-3: Multifunctional protein that regulates embryogenesis and cell differentiation and is required in various processes such as secondary palate development. Activation into mature form follows different steps: following cleavage of the proprotein in the Golgi apparatus, Latency-associated peptide (LAP) and Transforming growth factor beta-3 (TGF-beta-3) chains remain non-covalently linked rendering TGF-beta-3 inactive during storage in extracellular matrix. At the same time, LAP chain interacts with 'milieu molecules', such as LTBP1 and LRRC32/GARP that control activation of TGF-beta-3 and maintain it in a latent state during storage in extracellular milieus. TGF-beta-3 is released from LAP by integrins: integrin-binding results in distortion of the LAP chain and subsequent release of the active TGF-beta-3. Once activated following release of LAP, TGF-beta-3 acts by binding to TGF-beta receptors (TGFBR1 and TGFBR2), which transduce signal. In Homo sapiens (Human), this protein is Transforming growth factor beta-3 proprotein (TGFB3).